A 293-amino-acid chain; its full sequence is Elongation factor Ts (293 aa).

An involved in Mg(2+) ion dislocation from EF-Tu region spans residues 80–83 (TDFV).

It belongs to the EF-Ts family.

Its subcellular location is the cytoplasm. Associates with the EF-Tu.GDP complex and induces the exchange of GDP to GTP. It remains bound to the aminoacyl-tRNA.EF-Tu.GTP complex up to the GTP hydrolysis stage on the ribosome. The chain is Elongation factor Ts from Janthinobacterium sp. (strain Marseille) (Minibacterium massiliensis).